The following is a 261-amino-acid chain: Small ribosomal subunit protein uS2 (261 aa).

Residue Ser-2 is modified to N-acetylserine. The segment at 215-261 (AEEAKTTEDVEEAAPVDADEWTGETEEVDWAESGATPAVEDAAASNW) is disordered. Residues 223 to 244 (DVEEAAPVDADEWTGETEEVDW) are compositionally biased toward acidic residues.

The protein belongs to the universal ribosomal protein uS2 family. As to quaternary structure, component of the small ribosomal subunit. Mature ribosomes consist of a small (40S) and a large (60S) subunit. The 40S subunit contains about 33 different proteins and 1 molecule of RNA (18S). The 60S subunit contains about 49 different proteins and 3 molecules of RNA (25S, 5.8S and 5S). Interacts with RPS21.

It is found in the cytoplasm. In terms of biological role, required for the assembly and/or stability of the 40S ribosomal subunit. Required for the processing of the 20S rRNA-precursor to mature 18S rRNA in a late step of the maturation of 40S ribosomal subunits. The protein is Small ribosomal subunit protein uS2 of Scheffersomyces stipitis (strain ATCC 58785 / CBS 6054 / NBRC 10063 / NRRL Y-11545) (Yeast).